We begin with the raw amino-acid sequence, 486 residues long: 2-succinylbenzoate--CoA ligase (486 aa).

This sequence belongs to the ATP-dependent AMP-binding enzyme family. MenE subfamily.

The enzyme catalyses 2-succinylbenzoate + ATP + CoA = 2-succinylbenzoyl-CoA + AMP + diphosphate. Its pathway is quinol/quinone metabolism; 1,4-dihydroxy-2-naphthoate biosynthesis; 1,4-dihydroxy-2-naphthoate from chorismate: step 5/7. It functions in the pathway quinol/quinone metabolism; menaquinone biosynthesis. Converts 2-succinylbenzoate (OSB) to 2-succinylbenzoyl-CoA (OSB-CoA). This Bacillus subtilis (strain 168) protein is 2-succinylbenzoate--CoA ligase.